Reading from the N-terminus, the 380-residue chain is Tubulin-like protein CetZ (380 aa).

Residues 10-14 (QCGTK), 103-105 (GTG), glutamate 136, asparagine 163, and asparagine 181 each bind GTP. The interval 359 to 380 (PSLEATGSDDPEGFAEYREVSR) is disordered.

It belongs to the CetZ family.

The protein resides in the cytoplasm. Functionally, involved in cell shape control. This chain is Tubulin-like protein CetZ, found in Thermococcus kodakarensis (strain ATCC BAA-918 / JCM 12380 / KOD1) (Pyrococcus kodakaraensis (strain KOD1)).